The following is a 1121-amino-acid chain: Cuscuta receptor 1 (1121 aa).

The first 20 residues, 1–20 (MGNIKFLLLVFFLIVVVVNG), serve as a signal peptide directing secretion. Residues 21–1058 (CWEEERNALL…EESSELEDIQ (1038 aa)) are Extracellular-facing. N-linked (GlcNAc...) asparagine glycosylation is present at Asn-91. LRR repeat units lie at residues 98 to 122 (FKSL…GFSK), 126 to 152 (LPNL…CWIS), 185 to 209 (LSNL…ALGE), 210 to 233 (LRNL…SLKI), 234 to 259 (FPSL…IIDL), 260 to 282 (SNLE…KGNK), 284 to 308 (MTSL…SLKS), and 309 to 331 (FSSL…IYAL). Asn-224 carries N-linked (GlcNAc...) asparagine glycosylation. 3 N-linked (GlcNAc...) asparagine glycosylation sites follow: Asn-298, Asn-321, and Asn-333. The LRR 9 repeat unit spans residues 334–360 (LSTVEYLYFKGSSLNDNFLPNIGQMTS). N-linked (GlcNAc...) asparagine glycans are attached at residues Asn-372 and Asn-406. LRR repeat units lie at residues 383–406 (LKYI…CLGN), 407–432 (LTSL…IWRR), 433–457 (LTSL…QFSD), 459–479 (KKLI…EYQN), 507–531 (QYDL…LLEN), 556–580 (HLHL…MSLA), 581–605 (FPKL…ISGI), 607–628 (LTIL…LAVV), 630–654 (SPQL…EFRP), 655–678 (HVLS…VFLS), 680–701 (LITL…TRDN), 702–725 (RRLL…ICNL), 726–749 (KIIN…VSSL), 751–772 (LKHI…IFNF), 773–796 (SSLI…IGSL), 797–820 (SNLN…ICML), 822–846 (NLSI…YLTQ), 914–938 (LKYM…LGNM), 939–961 (SNIH…TFSN), 962–986 (LQEI…LLEL), and 988–1012 (SLAV…QFGT). N-linked (GlcNAc...) asparagine glycosylation is found at Asn-531, Asn-576, and Asn-588. N-linked (GlcNAc...) asparagine glycosylation occurs at Asn-689. N-linked (GlcNAc...) asparagine glycosylation occurs at Asn-771. Asn-822, Asn-937, Asn-945, Asn-976, Asn-998, Asn-1014, and Asn-1041 each carry an N-linked (GlcNAc...) asparagine glycan. A helical transmembrane segment spans residues 1059–1079 (CFYIGFVVSFGAILLGLAAAL). Over 1080 to 1121 (CLNRHWRRAWFRMIEALMFYCYYFVLDNIVTPIKSRWYKNVG) the chain is Cytoplasmic.

This sequence belongs to the RLP family. As to quaternary structure, interacts with an 11 kDa glycine-rich protein (GRP) of C.reflexa. Interacts with SOBIR1 and SOBIR1-like kinases; presence or absence of GRP has no effect on interaction.

It is found in the cell membrane. Its subcellular location is the cell surface. Its function is as follows. Involved in plant defense. Contributes to resistance against parasitic plant C.reflexa. Acts as a receptor for the 11 kDa glycine-rich protein (GRP) of C.reflexa inducing immune responses such as emission of stress-related phytohormone ethylene, reactive oxygen species (ROS) release, and hypersensitive cell death. Recognizes a specific pathogen-associated molecular pattern (PAMP), a cysteine-rich peptide 21 (crip21), from GRP located on the cell wall of C.reflexa. The chain is Cuscuta receptor 1 from Solanum lycopersicum (Tomato).